The sequence spans 235 residues: Protein Thf1 (235 aa).

A coiled-coil region spans residues 183-204 (DKLNKDLELYRSNLDKMAQALV). Positions 213 to 235 (DRKKREQRKQQSTAPVAPPSSNE) are disordered. Residues 222-235 (QQSTAPVAPPSSNE) are compositionally biased toward polar residues.

This sequence belongs to the THF1 family.

Functionally, may be involved in photosynthetic membrane biogenesis. The protein is Protein Thf1 of Nostoc punctiforme (strain ATCC 29133 / PCC 73102).